The following is a 322-amino-acid chain: tRNA dimethylallyltransferase (322 aa).

Position 21 to 28 (21 to 28 (GQTAVGKT)) interacts with ATP. 23–28 (TAVGKT) contributes to the substrate binding site. The segment at 46 to 49 (DSGC) is interaction with substrate tRNA.

The protein belongs to the IPP transferase family. In terms of assembly, monomer. Mg(2+) is required as a cofactor.

It catalyses the reaction adenosine(37) in tRNA + dimethylallyl diphosphate = N(6)-dimethylallyladenosine(37) in tRNA + diphosphate. In terms of biological role, catalyzes the transfer of a dimethylallyl group onto the adenine at position 37 in tRNAs that read codons beginning with uridine, leading to the formation of N6-(dimethylallyl)adenosine (i(6)A). This Wigglesworthia glossinidia brevipalpis protein is tRNA dimethylallyltransferase.